The sequence spans 232 residues: Large ribosomal subunit protein uL1 (232 aa).

Belongs to the universal ribosomal protein uL1 family. Part of the 50S ribosomal subunit.

In terms of biological role, binds directly to 23S rRNA. The L1 stalk is quite mobile in the ribosome, and is involved in E site tRNA release. Its function is as follows. Protein L1 is also a translational repressor protein, it controls the translation of the L11 operon by binding to its mRNA. The chain is Large ribosomal subunit protein uL1 from Thermosipho africanus (strain TCF52B).